We begin with the raw amino-acid sequence, 477 residues long: S-triazine hydrolase (477 aa).

Composition is skewed to low complexity over residues 38 to 73 (SPTTSTSAAPKSSTPPGWQCSPASSTPTPTSHKSSS) and 120 to 132 (PLSSTTRTSDPTT). 2 disordered regions span residues 38–77 (SPTTSTSAAPKSSTPPGWQCSPASSTPTPTSHKSSSGVVH) and 120–143 (PLSSTTRTSDPTTSPAPGPPGSPF).

Belongs to the metallo-dependent hydrolases superfamily. ATZ/TRZ family.

The protein operates within xenobiotic degradation; melamine degradation. Its function is as follows. Hydrolytic deamination of the S-triazine substrate melamine. This Gordonia rubripertincta (Rhodococcus corallinus) protein is S-triazine hydrolase (trzA).